Reading from the N-terminus, the 22-residue chain is Heliocin (22 aa).

Glutamine 1 carries the pyrrolidone carboxylic acid modification. The disordered stretch occupies residues 1–22; it reads QRFIHPTYRPPPQPRRPVIMRA. Threonine 7 carries O-linked (GalNAc...) threonine glycosylation.

As to quaternary structure, monomer. In terms of tissue distribution, hemolymph.

The protein localises to the secreted. In terms of biological role, has antibacterial activity, preferentially against Gram-negative bacteria. The sequence is that of Heliocin from Heliothis virescens (Tobacco budworm moth).